Reading from the N-terminus, the 97-residue chain is Venom peptide HsVx1 (97 aa).

A signal peptide spans 1–20; that stretch reads MSHLRIAVTFLCTLFALTAG.

It belongs to the scorpion La1-like peptide family. Contains 4 disulfide bonds. As to expression, expressed by the venom gland.

It is found in the secreted. This chain is Venom peptide HsVx1, found in Heterometrus spinifer (Asia giant forest scorpion).